Here is a 139-residue protein sequence, read N- to C-terminus: Protein GOS9 (139 aa).

Residues 5–139 (LVKIGTWGGN…VDSIGVYVHI (135 aa)) enclose the Jacalin-type lectin domain.

As to expression, expressed mainly in roots.

This chain is Protein GOS9 (GOS9), found in Oryza sativa subsp. indica (Rice).